The following is a 993-amino-acid chain: UPF0182 protein Sare_4110 (993 aa).

7 helical membrane passes run 18-38 (IGVL…VQAW), 61-81 (LLLF…NLWL), 110-130 (LGTW…LSAQ), 171-191 (GVAF…HYVF), 209-229 (AHLS…YVLD), 260-280 (ILAY…NAWM), and 283-303 (LVWP…IGGI). 2 disordered regions span residues 892–937 (QGEK…ADAA) and 974–993 (EQAA…SPGG). Pro residues predominate over residues 900–929 (STPPPSGETPAPTPTPTPTPSSPSVTPPPV). Over residues 976 to 993 (AAGPGSAATPTGSPSPGG) the composition is skewed to low complexity.

Belongs to the UPF0182 family.

It is found in the cell membrane. The polypeptide is UPF0182 protein Sare_4110 (Salinispora arenicola (strain CNS-205)).